Here is a 384-residue protein sequence, read N- to C-terminus: Chaperone protein DnaJ (384 aa).

The 65-residue stretch at 5–69 (DYYKVLGVDR…QKRAQYDQFG (65 aa)) folds into the J domain. Residues 141–223 (GKKTQVSYTR…CGGKGTVERK (83 aa)) form a CR-type zinc finger. Zn(2+)-binding residues include C154, C157, C171, C174, C197, C200, C211, and C214. CXXCXGXG motif repeat units follow at residues 154 to 161 (CETCGGNG), 171 to 178 (CDKCHGTG), 197 to 204 (CDKCNGRG), and 211 to 218 (CKTCGGKG).

The protein belongs to the DnaJ family. As to quaternary structure, homodimer. Zn(2+) serves as cofactor.

The protein resides in the cytoplasm. Participates actively in the response to hyperosmotic and heat shock by preventing the aggregation of stress-denatured proteins and by disaggregating proteins, also in an autonomous, DnaK-independent fashion. Unfolded proteins bind initially to DnaJ; upon interaction with the DnaJ-bound protein, DnaK hydrolyzes its bound ATP, resulting in the formation of a stable complex. GrpE releases ADP from DnaK; ATP binding to DnaK triggers the release of the substrate protein, thus completing the reaction cycle. Several rounds of ATP-dependent interactions between DnaJ, DnaK and GrpE are required for fully efficient folding. Also involved, together with DnaK and GrpE, in the DNA replication of plasmids through activation of initiation proteins. In Lactobacillus acidophilus (strain ATCC 700396 / NCK56 / N2 / NCFM), this protein is Chaperone protein DnaJ.